The following is a 519-amino-acid chain: F-box only protein 31-A (519 aa).

Residues 11–37 (GQSGGCRRRQQRKGAGNDPELEDEEEE) form a disordered region. An F-box domain is found at 54–100 (PHSLLLLPPEILVEIFSLLPGTELGGLAQVCSKFRQILTTDTIWKRR). Positions 196, 204, 220, and 226 each coordinate Zn(2+). Over residues 369-390 (REQRQTDNEEDDGRGAGPDKAE) the composition is skewed to basic and acidic residues. A disordered region spans residues 369–424 (REQRQTDNEEDDGRGAGPDKAEPAQQPAPLLRPPNEDANGADDDGDGGEQKPPNVQ).

This sequence belongs to the FBXO31 family. As to quaternary structure, part of a SCF (SKP1-cullin-F-box) protein ligase complex SCF(FBXO31).

The protein localises to the cytoplasm. The protein operates within protein modification; protein ubiquitination. Substrate-recognition component of the SCF(FBXO31) protein ligase complex, which specifically mediates the ubiquitination of proteins amidated at their C-terminus in response to oxidative stress, leading to their degradation by the proteasome. Fbxo31 specifically recognizes and binds C-terminal peptides bearing an amide: C-terminal amidation in response to oxidative stress takes place following protein fragmentation. The SCF(FBXO31) also plays a role in G1 arrest following DNA damage by mediating ubiquitination of phosphorylated cyclin-D1 (ccnd1), promoting its degradation by the proteasome, resulting in G1 arrest. The SCF(FBXO31) complex is however not a major regulator of ccnd1 stability during the G1/S transition. In Xenopus laevis (African clawed frog), this protein is F-box only protein 31-A (fbxo31-a).